Consider the following 98-residue polypeptide: Late cornified envelope-like proline-rich protein 1 (98 aa).

Residues 1–26 (MSSDDKSKSNDPKTEPKNCDPKCEQK) form a disordered region.

Belongs to the cornifin (SPRR) family.

This Homo sapiens (Human) protein is Late cornified envelope-like proline-rich protein 1 (LELP1).